The chain runs to 330 residues: Ribosomal RNA small subunit methyltransferase H (330 aa).

Residues 48–50, D67, L101, D115, and Q122 each bind S-adenosyl-L-methionine; that span reads GGH.

It belongs to the methyltransferase superfamily. RsmH family.

Its subcellular location is the cytoplasm. It catalyses the reaction cytidine(1402) in 16S rRNA + S-adenosyl-L-methionine = N(4)-methylcytidine(1402) in 16S rRNA + S-adenosyl-L-homocysteine + H(+). Its function is as follows. Specifically methylates the N4 position of cytidine in position 1402 (C1402) of 16S rRNA. The chain is Ribosomal RNA small subunit methyltransferase H from Pseudarthrobacter chlorophenolicus (strain ATCC 700700 / DSM 12829 / CIP 107037 / JCM 12360 / KCTC 9906 / NCIMB 13794 / A6) (Arthrobacter chlorophenolicus).